A 551-amino-acid polypeptide reads, in one-letter code: Prunin 1 Pru du 6.0101 (551 aa).

The signal sequence occupies residues 1 to 20; the sequence is MAKAFVFSLCLLLVFNGCLA. 2 cysteine pairs are disulfide-bonded: Cys32–Cys65 and Cys108–Cys374. Residues 37-312 enclose the Cupin type-1 1 domain; that stretch reads LQAREPDNRI…ALNVNEETAR (276 aa). Disordered stretches follow at residues 111-194, 238-293, and 311-361; these read TFEE…QKTR, NPRK…NVFS, and ARNL…QQQG. Composition is skewed to low complexity over residues 114–124, 132–148, and 168–185; these read ESQQSSQQGRQ, QQQQ…QQEQ, and QEQQ…QQFR. 4 igE-binding regions span residues 118 to 132, 145 to 159, 161 to 175, and 225 to 239; these read SSQQ…QERQ, QQEQ…QQGR, QQEE…QGQQ, and LFHV…DQNP. The segment covering 254–275 has biased composition (low complexity); the sequence is QQGQSQPRQQGEQGRPGQHQQP. The tract at residues 281 to 295 is igE-binding; that stretch reads QQEQQGSGNNVFSGF. Composition is skewed to polar residues over residues 282-293 and 311-323; these read QEQQGSGNNVFS and ARNL…NRNQ. Residues 339-350 show a composition bias toward basic and acidic residues; the sequence is GRQEREHEERQQ. A compositionally biased stretch (low complexity) spans 351–361; the sequence is EQLQQERQQQG. Residues 367 to 372 carry the NGXEET; peptidase recognition motif motif; it reads NGLEET. One can recognise a Cupin type-1 2 domain in the interval 380–529; sequence ENIGNPERAD…AYQISREQAR (150 aa). Residues 510-524 form an igE-binding region; it reads RALPDEVLANAYQIS.

The protein belongs to the 11S seed storage protein (globulins) family. As to quaternary structure, hexamer of two trimers; each subunit is composed of an acidic and a basic chain derived from a single precursor and linked by a disulfide bond. In terms of processing, proteolytically processed from a single precursor to produce an acidic and a basic chain that are linked by a disulfide bond. In terms of tissue distribution, expressed in seed (at protein level).

In terms of biological role, seed storage protein. The sequence is that of Prunin 1 Pru du 6.0101 from Prunus dulcis (Almond).